We begin with the raw amino-acid sequence, 686 residues long: DNA ligase (686 aa).

NAD(+) contacts are provided by residues aspartate 45–aspartate 49, serine 94–leucine 95, and glutamate 127. The N6-AMP-lysine intermediate role is filled by lysine 129. Residues arginine 150, glutamate 187, lysine 302, and lysine 326 each contribute to the NAD(+) site. Zn(2+) is bound by residues cysteine 420, cysteine 423, cysteine 438, and cysteine 444. The region spanning leucine 605 to serine 686 is the BRCT domain.

Belongs to the NAD-dependent DNA ligase family. LigA subfamily. It depends on Mg(2+) as a cofactor. The cofactor is Mn(2+).

It catalyses the reaction NAD(+) + (deoxyribonucleotide)n-3'-hydroxyl + 5'-phospho-(deoxyribonucleotide)m = (deoxyribonucleotide)n+m + AMP + beta-nicotinamide D-nucleotide.. In terms of biological role, DNA ligase that catalyzes the formation of phosphodiester linkages between 5'-phosphoryl and 3'-hydroxyl groups in double-stranded DNA using NAD as a coenzyme and as the energy source for the reaction. It is essential for DNA replication and repair of damaged DNA. In Psychrobacter sp. (strain PRwf-1), this protein is DNA ligase.